The chain runs to 479 residues: Adenylate kinase 8 (479 aa).

Adenylate kinase regions lie at residues 58–258 (PRVV…TYVQ) and 269–471 (PKVL…SGII). 67 to 72 (ASGKTT) serves as a coordination point for ATP. The interval 87–113 (TKENLLEREFSLLSLEAKKHYQVYKRV) is NMP 1. Residues 140–143 (GIPE), glutamine 147, and arginine 203 each bind AMP. An LID 1 region spans residues 177 to 206 (GKRIDPVTGEIYHTTFDWPPELEIQNRLIQ). 278-283 (GCGKKL) is an ATP binding site. Positions 298 to 327 (SCGQLLKEAMAAESSLGDLIEPFFEKRMTV) are NMP 2. AMP is bound by residues 325–327 (MTV), 354–357 (GFPR), and glutamine 361. The segment at 391-424 (LRRTDPVTGERFHLMYKPPPTIEVQARLLQNPKD) is LID 2. Arginine 392 contributes to the ATP binding site.

It belongs to the adenylate kinase family. In terms of assembly, interacts with CFAP45 and CFAP52; CFAP45 and AK8 dimerization may create a cavity at the interface of the dimer that can accommodate AMP.

Its subcellular location is the cytoplasm. It localises to the cytosol. The protein localises to the cytoskeleton. The protein resides in the cilium axoneme. It carries out the reaction AMP + ATP = 2 ADP. The enzyme catalyses a 2'-deoxyribonucleoside 5'-diphosphate + ATP = a 2'-deoxyribonucleoside 5'-triphosphate + ADP. The catalysed reaction is a ribonucleoside 5'-diphosphate + ATP = a ribonucleoside 5'-triphosphate + ADP. Its function is as follows. Nucleoside monophosphate (NMP) kinase that catalyzes the reversible transfer of the terminal phosphate group between nucleoside triphosphates and monophosphates. Has highest activity toward AMP, and weaker activity toward dAMP, CMP and dCMP. Also displays broad nucleoside diphosphate kinase activity. In Rattus norvegicus (Rat), this protein is Adenylate kinase 8 (Ak8).